The primary structure comprises 90 residues: Small ribosomal subunit protein bS20 (90 aa).

Belongs to the bacterial ribosomal protein bS20 family.

Functionally, binds directly to 16S ribosomal RNA. The chain is Small ribosomal subunit protein bS20 from Rickettsia felis (strain ATCC VR-1525 / URRWXCal2) (Rickettsia azadi).